The following is a 122-amino-acid chain: Fluoride-specific ion channel FluC (122 aa).

The next 4 membrane-spanning stretches (helical) occupy residues Ile-4 to Ile-24, Leu-36 to Gly-56, Phe-65 to Phe-85, and Ile-100 to Phe-120. The Na(+) site is built by Gly-72 and Thr-75.

The protein belongs to the fluoride channel Fluc/FEX (TC 1.A.43) family.

It is found in the cell membrane. The catalysed reaction is fluoride(in) = fluoride(out). Na(+) is not transported, but it plays an essential structural role and its presence is essential for fluoride channel function. Its function is as follows. Fluoride-specific ion channel. Important for reducing fluoride concentration in the cell, thus reducing its toxicity. This is Fluoride-specific ion channel FluC from Methanococcus maripaludis (strain DSM 14266 / JCM 13030 / NBRC 101832 / S2 / LL).